Consider the following 948-residue polypeptide: UvrABC system protein A (948 aa).

42–49 (GLSGSGKS) is an ATP binding site. The segment at 262–289 (CPVCSYSLPELEPRLFSFNNPMGSCPTC) adopts a C4-type zinc-finger fold. ABC transporter domains are found at residues 319–596 (WDKR…ENSV) and 616–945 (VNPG…KYLK). An ATP-binding site is contributed by 649–656 (GVSGSGKS). The C4-type zinc finger occupies 748-774 (CEACQGDGVIKVEMHFLPDVYVPCEVC).

This sequence belongs to the ABC transporter superfamily. UvrA family. Forms a heterotetramer with UvrB during the search for lesions.

Its subcellular location is the cytoplasm. The UvrABC repair system catalyzes the recognition and processing of DNA lesions. UvrA is an ATPase and a DNA-binding protein. A damage recognition complex composed of 2 UvrA and 2 UvrB subunits scans DNA for abnormalities. When the presence of a lesion has been verified by UvrB, the UvrA molecules dissociate. This Neisseria meningitidis serogroup A / serotype 4A (strain DSM 15465 / Z2491) protein is UvrABC system protein A.